The chain runs to 362 residues: Talin rod domain-containing protein 1 (362 aa).

The tract at residues 1-26 is disordered; that stretch reads MASGSAGKPTGEAASPAPASAIGGAS. Position 2 is an N-acetylalanine (Ala2). Residues 13–26 show a composition bias toward low complexity; it reads AASPAPASAIGGAS.

In terms of assembly, may homodimerize. Interacts with F-actin.

Functionally, actin-binding protein which may have an oncogenic function and regulates cell proliferation, migration and invasion in cancer cells. This chain is Talin rod domain-containing protein 1, found in Homo sapiens (Human).